The sequence spans 416 residues: D-amino acid dehydrogenase 2 (416 aa).

5–19 provides a ligand contact to FAD; that stretch reads VCIIGAGVVGLATAY.

Belongs to the DadA oxidoreductase family. It depends on FAD as a cofactor.

It catalyses the reaction a D-alpha-amino acid + A + H2O = a 2-oxocarboxylate + AH2 + NH4(+). In terms of biological role, oxidative deamination of D-amino acids. In Pseudomonas aeruginosa (strain ATCC 15692 / DSM 22644 / CIP 104116 / JCM 14847 / LMG 12228 / 1C / PRS 101 / PAO1), this protein is D-amino acid dehydrogenase 2 (dadA2).